Reading from the N-terminus, the 268-residue chain is NADH-quinone oxidoreductase subunit B 2 (268 aa).

Residues cysteine 42, cysteine 43, cysteine 108, and cysteine 138 each contribute to the [4Fe-4S] cluster site. Residues serine 237 to arginine 268 are disordered. Over residues glutamate 247 to arginine 268 the composition is skewed to basic and acidic residues.

Belongs to the complex I 20 kDa subunit family. In terms of assembly, NDH-1 is composed of 14 different subunits. Subunits NuoB, C, D, E, F, and G constitute the peripheral sector of the complex. [4Fe-4S] cluster serves as cofactor.

The protein resides in the cell membrane. It catalyses the reaction a quinone + NADH + 5 H(+)(in) = a quinol + NAD(+) + 4 H(+)(out). Its function is as follows. NDH-1 shuttles electrons from NADH, via FMN and iron-sulfur (Fe-S) centers, to quinones in the respiratory chain. The immediate electron acceptor for the enzyme in this species is believed to be ubiquinone. Couples the redox reaction to proton translocation (for every two electrons transferred, four hydrogen ions are translocated across the cytoplasmic membrane), and thus conserves the redox energy in a proton gradient. The polypeptide is NADH-quinone oxidoreductase subunit B 2 (Roseiflexus castenholzii (strain DSM 13941 / HLO8)).